The primary structure comprises 326 residues: Probable cell division protein WhiA (326 aa).

The H-T-H motif DNA-binding region spans 275 to 308 (SLEELGALADPPLTKDAIAGRIRRLLALADKRAR).

This sequence belongs to the WhiA family.

Involved in cell division and chromosome segregation. This chain is Probable cell division protein WhiA, found in Salinispora tropica (strain ATCC BAA-916 / DSM 44818 / JCM 13857 / NBRC 105044 / CNB-440).